A 691-amino-acid chain; its full sequence is Elongation factor G (691 aa).

The tr-type G domain maps to 12 to 286 (KKLRNIGIMA…GVLEYLPSPL (275 aa)). Residues 21–28 (AHIDAGKT), 85–89 (DTPGH), and 139–142 (NKMD) contribute to the GTP site.

It belongs to the TRAFAC class translation factor GTPase superfamily. Classic translation factor GTPase family. EF-G/EF-2 subfamily.

The protein localises to the cytoplasm. In terms of biological role, catalyzes the GTP-dependent ribosomal translocation step during translation elongation. During this step, the ribosome changes from the pre-translocational (PRE) to the post-translocational (POST) state as the newly formed A-site-bound peptidyl-tRNA and P-site-bound deacylated tRNA move to the P and E sites, respectively. Catalyzes the coordinated movement of the two tRNA molecules, the mRNA and conformational changes in the ribosome. The protein is Elongation factor G of Thermosipho melanesiensis (strain DSM 12029 / CIP 104789 / BI429).